A 61-amino-acid polypeptide reads, in one-letter code: Large ribosomal subunit protein uL30 (61 aa).

It belongs to the universal ribosomal protein uL30 family. As to quaternary structure, part of the 50S ribosomal subunit.

This chain is Large ribosomal subunit protein uL30, found in Bordetella avium (strain 197N).